The chain runs to 384 residues: Actin-binding Rho-activating protein (384 aa).

Over residues 1 to 11 (MARGEKGRGEG) the composition is skewed to basic and acidic residues. 3 disordered regions span residues 1 to 20 (MARGEKGRGEGPAKSALRKV), 32 to 159 (GWQQ…SPTR), and 181 to 211 (EQEELKCRSDSIDTEDSGYGGETEERPEQDG). A compositionally biased stretch (polar residues) spans 35-47 (QWANENSTRQAQE). Residues 134 to 145 (DGDEPEPEQPES) show a composition bias toward acidic residues. A phosphoserine mark is found at Ser156 and Ser191. 2 actin-binding regions span residues 202-302 (ETEE…AERA) and 303-384 (KRAE…TLLK). Interaction with actin stretches follow at residues 243–288 (SQVG…GDEG) and 355–384 (MRARKHGLVDFEGEMLWQGRDDHVVITLLK).

As to quaternary structure, binds F-actin and ABLIM1, ABLIM2 and ABLIM3. Interaction with ABLIM2 and ABLIM3 enhances activity. As to expression, specifically expressed in heart and skeletal muscles.

It localises to the cytoplasm. The protein localises to the myofibril. The protein resides in the sarcomere. Its subcellular location is the cytoskeleton. Acts as an activator of serum response factor (SRF)-dependent transcription possibly by inducing nuclear translocation of MKL1 or MKL2 and through a mechanism requiring Rho-actin signaling. This Sus scrofa (Pig) protein is Actin-binding Rho-activating protein (ABRA).